We begin with the raw amino-acid sequence, 356 residues long: S-adenosylmethionine:tRNA ribosyltransferase-isomerase (356 aa).

Belongs to the QueA family. Monomer.

The protein resides in the cytoplasm. It carries out the reaction 7-aminomethyl-7-carbaguanosine(34) in tRNA + S-adenosyl-L-methionine = epoxyqueuosine(34) in tRNA + adenine + L-methionine + 2 H(+). It functions in the pathway tRNA modification; tRNA-queuosine biosynthesis. Transfers and isomerizes the ribose moiety from AdoMet to the 7-aminomethyl group of 7-deazaguanine (preQ1-tRNA) to give epoxyqueuosine (oQ-tRNA). This is S-adenosylmethionine:tRNA ribosyltransferase-isomerase from Shigella boydii serotype 4 (strain Sb227).